The primary structure comprises 173 residues: Transcriptional repressor NrdR (173 aa).

A zinc finger spans residues 3–34 (CPYCGSLDTQVKDSRPTEDNTAIRRRRVCPDC). Residues 49-139 (LMVVKRSGRR…VYRNFREARD (91 aa)) enclose the ATP-cone domain.

Belongs to the NrdR family. Zn(2+) serves as cofactor.

In terms of biological role, negatively regulates transcription of bacterial ribonucleotide reductase nrd genes and operons by binding to NrdR-boxes. The sequence is that of Transcriptional repressor NrdR from Azorhizobium caulinodans (strain ATCC 43989 / DSM 5975 / JCM 20966 / LMG 6465 / NBRC 14845 / NCIMB 13405 / ORS 571).